The chain runs to 873 residues: Alanine--tRNA ligase (873 aa).

The Zn(2+) site is built by His562, His566, Cys666, and His670.

It belongs to the class-II aminoacyl-tRNA synthetase family. Zn(2+) is required as a cofactor.

It localises to the cytoplasm. The enzyme catalyses tRNA(Ala) + L-alanine + ATP = L-alanyl-tRNA(Ala) + AMP + diphosphate. In terms of biological role, catalyzes the attachment of alanine to tRNA(Ala) in a two-step reaction: alanine is first activated by ATP to form Ala-AMP and then transferred to the acceptor end of tRNA(Ala). Also edits incorrectly charged Ser-tRNA(Ala) and Gly-tRNA(Ala) via its editing domain. The sequence is that of Alanine--tRNA ligase from Dichelobacter nodosus (strain VCS1703A).